The chain runs to 1125 residues: ATP-dependent DNA helicase Hel308 (1125 aa).

A Q motif motif is present at residues 1–29 (MKVDELPIDERIKRVIKERGIEELYPPQA). Residues Gln-28 and 46 to 53 (IPTASGKT) each bind ATP. Residues 33–197 (KSGVLEGKNL…WLDASLVVSD (165 aa)) form the Helicase ATP-binding domain. A DEAH box motif is present at residues 145–148 (DEVH). The Helicase C-terminal domain occupies 226–440 (NWESLVLDAV…ELKERLESET (215 aa)). The 141-residue stretch at 500 to 640 (LIGLWIAEGS…LQLLVASLGY (141 aa)) folds into the DOD-type homing endonuclease domain.

This sequence belongs to the helicase family. Hel308 subfamily. Monomer. In terms of processing, this protein undergoes a protein self splicing that involves a post-translational excision of the intervening region (intein) followed by peptide ligation.

It catalyses the reaction Couples ATP hydrolysis with the unwinding of duplex DNA by translocating in the 3'-5' direction.. The catalysed reaction is ATP + H2O = ADP + phosphate + H(+). Functionally, DNA-dependent ATPase and 3'-5' DNA helicase that may be involved in repair of stalled replication forks. The sequence is that of ATP-dependent DNA helicase Hel308 from Thermococcus kodakarensis (strain ATCC BAA-918 / JCM 12380 / KOD1) (Pyrococcus kodakaraensis (strain KOD1)).